The following is a 342-amino-acid chain: S-adenosylmethionine:tRNA ribosyltransferase-isomerase (342 aa).

Belongs to the QueA family. Monomer.

It localises to the cytoplasm. It carries out the reaction 7-aminomethyl-7-carbaguanosine(34) in tRNA + S-adenosyl-L-methionine = epoxyqueuosine(34) in tRNA + adenine + L-methionine + 2 H(+). It functions in the pathway tRNA modification; tRNA-queuosine biosynthesis. In terms of biological role, transfers and isomerizes the ribose moiety from AdoMet to the 7-aminomethyl group of 7-deazaguanine (preQ1-tRNA) to give epoxyqueuosine (oQ-tRNA). This Bacillus licheniformis (strain ATCC 14580 / DSM 13 / JCM 2505 / CCUG 7422 / NBRC 12200 / NCIMB 9375 / NCTC 10341 / NRRL NRS-1264 / Gibson 46) protein is S-adenosylmethionine:tRNA ribosyltransferase-isomerase.